The primary structure comprises 233 residues: LexA repressor (233 aa).

Residues 26-46 (FDEMKEALDLRSKSGIHRLIT) constitute a DNA-binding region (H-T-H motif). Residues serine 154 and lysine 192 each act as for autocatalytic cleavage activity in the active site.

The protein belongs to the peptidase S24 family. In terms of assembly, homodimer.

The enzyme catalyses Hydrolysis of Ala-|-Gly bond in repressor LexA.. Functionally, represses a number of genes involved in the response to DNA damage (SOS response), including recA and lexA. In the presence of single-stranded DNA, RecA interacts with LexA causing an autocatalytic cleavage which disrupts the DNA-binding part of LexA, leading to derepression of the SOS regulon and eventually DNA repair. The chain is LexA repressor from Roseobacter denitrificans (strain ATCC 33942 / OCh 114) (Erythrobacter sp. (strain OCh 114)).